The sequence spans 264 residues: Zinc import ATP-binding protein ZnuC (264 aa).

In terms of domain architecture, ABC transporter spans 11-226; it reads IELKGVNVTF…PVFIRFFGNQ (216 aa). 43-50 is a binding site for ATP; the sequence is GPNGGGKS.

Belongs to the ABC transporter superfamily. Zinc importer (TC 3.A.1.15.5) family. As to quaternary structure, the complex is composed of two ATP-binding proteins (ZnuC), two transmembrane proteins (ZnuB) and a solute-binding protein (ZnuA).

It localises to the cell inner membrane. It catalyses the reaction Zn(2+)(out) + ATP(in) + H2O(in) = Zn(2+)(in) + ADP(in) + phosphate(in) + H(+)(in). In terms of biological role, part of the ABC transporter complex ZnuABC involved in zinc import. Responsible for energy coupling to the transport system. The polypeptide is Zinc import ATP-binding protein ZnuC (Histophilus somni (strain 129Pt) (Haemophilus somnus)).